The primary structure comprises 178 residues: Large ribosomal subunit protein uL6 (178 aa).

It belongs to the universal ribosomal protein uL6 family. As to quaternary structure, part of the 50S ribosomal subunit.

This protein binds to the 23S rRNA, and is important in its secondary structure. It is located near the subunit interface in the base of the L7/L12 stalk, and near the tRNA binding site of the peptidyltransferase center. The chain is Large ribosomal subunit protein uL6 from Nitratiruptor sp. (strain SB155-2).